A 145-amino-acid polypeptide reads, in one-letter code: Copper transporter 4 (145 aa).

The next 2 membrane-spanning stretches (helical) occupy residues 53–73 (GMYA…EWLA) and 106–126 (YLVI…AIFG).

The protein belongs to the copper transporter (Ctr) (TC 1.A.56) family. SLC31A subfamily. As to expression, highly expressed in roots and at lower levels in leaves, stems and flowers.

It is found in the membrane. In terms of biological role, involved in the transport of copper. The protein is Copper transporter 4 (COPT4) of Arabidopsis thaliana (Mouse-ear cress).